The following is a 169-amino-acid chain: METLQGLLLWMLLSVGGVWASRGPLRPLCRPINATLAAEKEACPICITFTTSICAGYCPSMVRVMPAALPAIPQPVCTYRELRFASIRLPGCPPGVDPMVSFPVALSCHCGPCQIKTTDCGVFRDQPLACAPQASSSSKDPPSQPLTSTSTPTPGASRRSSHPLPIKTS.

Positions 1-20 (METLQGLLLWMLLSVGGVWA) are cleaved as a signal peptide. Intrachain disulfides connect cysteine 29–cysteine 77, cysteine 43–cysteine 92, cysteine 46–cysteine 130, cysteine 54–cysteine 108, cysteine 58–cysteine 110, and cysteine 113–cysteine 120. Residue asparagine 33 is glycosylated (N-linked (GlcNAc...) asparagine). The interval 131–169 (APQASSSSKDPPSQPLTSTSTPTPGASRRSSHPLPIKTS) is disordered. Residues serine 138 and serine 143 are each glycosylated (O-linked (GalNAc...) serine). Residues 145–158 (PLTSTSTPTPGASR) show a composition bias toward low complexity. O-linked (GalNAc...) threonine glycosylation is present at threonine 147. O-linked (GalNAc...) serine glycosylation is present at serine 148. Residue threonine 149 is glycosylated (O-linked (GalNAc...) threonine). An O-linked (GalNAc...) serine glycan is attached at serine 150. 2 O-linked (GalNAc...) threonine glycosylation sites follow: threonine 151 and threonine 153. O-linked (GalNAc...) serine glycans are attached at residues serine 157, serine 160, serine 161, and serine 169.

The protein belongs to the glycoprotein hormones subunit beta family. As to quaternary structure, heterodimer of a common alpha chain and a unique beta chain which confers biological specificity to thyrotropin, lutropin, follitropin and gonadotropin. Microheterogeneity at Asn-33. O-glycosylation appears to be responsible for the beta subunit contribution to the difference in LH-receptor binding activity between LSH-B and CG-B.

The protein resides in the secreted. Functionally, promotes spermatogenesis and ovulation by stimulating the testes and ovaries to synthesize steroids. This is Lutropin/choriogonadotropin subunit beta (LHB) from Equus caballus (Horse).